A 261-amino-acid polypeptide reads, in one-letter code: MSLRPLPLLVVPGLLQLLFCDSEEVIHNTESVDWEDRTVPETLVGNLFHSRITSPLRLFVKQPPDPKPSYADNTKNFWDWLANITEIQEQLARTKRRPIVKTGKFKKMFGWGDFHSNIKTVKLNLLITGKIVDHGNGTFSVYFRHNSTGLGNVSVSLVPPSKVVEFEISPQSTLETKESKSFNCHIEYEKTDRAKKTALCNFDPSKICYQEQTQSHVSWLCSKPFKVICIHIIFYSVDYKLVQKVCPDYNYHSETPYLSFG.

A signal peptide spans 1 to 22 (MSLRPLPLLVVPGLLQLLFCDS). The tract at residues 23–87 (EEVIHNTESV…WDWLANITEI (65 aa)) is II. Residues Asn-83, Asn-136, Asn-146, and Asn-152 are each glycosylated (N-linked (GlcNAc...) asparagine). Residues 88-166 (QEQLARTKRR…LVPPSKVVEF (79 aa)) are III. An IV (linker domain) region spans residues 167-175 (EISPQSTLE). The v (Cys-rich) stretch occupies residues 176–261 (TKESKSFNCH…HSETPYLSFG (86 aa)).

This sequence belongs to the neurexophilin family. In terms of processing, may be proteolytically processed at the boundary between the N-terminal non-conserved and the central conserved domain in neuron-like cells.

The protein localises to the secreted. Its function is as follows. May be signaling molecules that resemble neuropeptides and that act by binding to alpha-neurexins and possibly other receptors. The chain is Neurexophilin-2 (Nxph2) from Mus musculus (Mouse).